A 311-amino-acid polypeptide reads, in one-letter code: Formimidoylglutamase (311 aa).

6 residues coordinate Mn(2+): His-130, Asp-155, His-157, Asp-159, Cys-242, and Asp-244.

This sequence belongs to the arginase family. Requires Mn(2+) as cofactor.

It catalyses the reaction N-formimidoyl-L-glutamate + H2O = formamide + L-glutamate. Its pathway is amino-acid degradation; L-histidine degradation into L-glutamate; L-glutamate from N-formimidoyl-L-glutamate (hydrolase route): step 1/1. In terms of biological role, catalyzes the conversion of N-formimidoyl-L-glutamate to L-glutamate and formamide. The protein is Formimidoylglutamase of Staphylococcus haemolyticus (strain JCSC1435).